We begin with the raw amino-acid sequence, 91 residues long: Long neurotoxin OH-57 (91 aa).

Residues 1-21 form the signal peptide; the sequence is MKTLLLTLVVVTIVCLDLGYT. 5 cysteine pairs are disulfide-bonded: Cys24–Cys41, Cys34–Cys62, Cys47–Cys51, Cys66–Cys77, and Cys78–Cys83.

It belongs to the three-finger toxin family. Long-chain subfamily. Type II alpha-neurotoxin sub-subfamily. In terms of tissue distribution, expressed by the venom gland.

It localises to the secreted. Functionally, binds with high affinity to muscular (alpha-1/CHRNA1) and neuronal (alpha-7/CHRNA7) nicotinic acetylcholine receptor (nAChR) and inhibits acetylcholine from binding to the receptor, thereby impairing neuromuscular and neuronal transmission. In Ophiophagus hannah (King cobra), this protein is Long neurotoxin OH-57.